A 472-amino-acid polypeptide reads, in one-letter code: F420-non-reducing hydrogenase subunit A (472 aa).

The Ni(2+) site is built by Cys-61, Cys-64, Cys-442, and Cys-445.

It belongs to the [NiFe]/[NiFeSe] hydrogenase large subunit family. In terms of assembly, the F420-non-reducing hydrogenase is composed of three subunits; MvhA, MvhD and MvhG. It forms a complex with the heterodisulfide reductase (hdr). Requires Ni(2+) as cofactor.

Its function is as follows. Part of a complex that provides reducing equivalents for heterodisulfide reductase. The protein is F420-non-reducing hydrogenase subunit A (mvhA) of Methanothermobacter thermautotrophicus (strain ATCC 29096 / DSM 1053 / JCM 10044 / NBRC 100330 / Delta H) (Methanobacterium thermoautotrophicum).